We begin with the raw amino-acid sequence, 780 residues long: Lethal(3)malignant brain tumor-like protein 3 (780 aa).

The tract at residues M1–W64 is interaction with RBPJ. Required for transcription repressor activity on Notch target genes. The disordered stretch occupies residues D149–L220. Acidic residues-rich tracts occupy residues D157–D166 and E185–M194. MBT repeat units lie at residues W232–P332, F340–P439, and F448–P543. The CCHHC-type; degenerate zinc-finger motif lies at L549 to D593. The tract at residues P597–Q665 is disordered. The segment at L600 to T710 is interaction with DCAF5. S608 carries the post-translational modification Phosphoserine. K637 participates in a covalent cross-link: Glycyl lysine isopeptide (Lys-Gly) (interchain with G-Cter in SUMO2). Positions R643–P661 are enriched in basic and acidic residues. Residue K704 forms a Glycyl lysine isopeptide (Lys-Gly) (interchain with G-Cter in SUMO2) linkage. Residues W708 to A772 enclose the SAM domain.

In terms of assembly, interacts with RNF2. Interacts (via SAM domain) with SAMD1 (via SAM domain); the interaction mediates L3MBTL3 binding to chromatin. Interacts with RBPJ; the interaction is required for L3MBTL3 localization to chromatin and is impaired by Notch-derived peptides containing the intracellular domain (NICD). Interacts (via SAM domain) with KDM1A. Interacts with DCAF5. Interacts with DNMT1. Interacts with E2F1. Interacts with SOX2. Interacts with SFMBT1.

It is found in the nucleus. Is a negative regulator of Notch target genes expression, required for RBPJ-mediated transcriptional repression. It recruits KDM1A to Notch-responsive elements and promotes KDM1A-mediated H3K4me demethylation. Involved in the regulation of ubiquitin-dependent degradation of a set of methylated non-histone proteins, including SOX2, DNMT1 and E2F1. It acts as an adapter recruiting the CRL4-DCAF5 E3 ubiquitin ligase complex to methylated target proteins. Required for normal maturation of myeloid progenitor cells. This is Lethal(3)malignant brain tumor-like protein 3 from Homo sapiens (Human).